The sequence spans 510 residues: NAD(P)H-quinone oxidoreductase subunit 2 A, chloroplastic (510 aa).

13 helical membrane-spanning segments follow: residues 24–44 (LLLFDGSLIFPECILIFGLIL), 57–77 (IPWLYFISSTSLVMSITALLF), 99–119 (IFQFLILLCSTLCIPLSVEYI), 124–144 (MAITEFLLFVLTATLGGMFLC), 149–169 (LITIFVAPECFSLCSYLLSGY), 183–203 (YLLMGGASSSILVHGFSWLYG), 227–247 (PGISIALIFITVGIGFKLSPA), 295–315 (WHLLLEILAILSMILGNLIAI), 323–343 (MLAYSSIGQIGYVIIGIIVGD), 354–374 (YMLFYISMNLGTFACIVLFGL), 395–415 (ALSLALCLLSLGGLPPLAGFF), 418–438 (LYLFWCGWQAGLYFLVLIGLL), and 484–504 (MIVCVIASTIPGISMNPIIAI).

This sequence belongs to the complex I subunit 2 family. In terms of assembly, NDH is composed of at least 16 different subunits, 5 of which are encoded in the nucleus.

It localises to the plastid. Its subcellular location is the chloroplast thylakoid membrane. It carries out the reaction a plastoquinone + NADH + (n+1) H(+)(in) = a plastoquinol + NAD(+) + n H(+)(out). The enzyme catalyses a plastoquinone + NADPH + (n+1) H(+)(in) = a plastoquinol + NADP(+) + n H(+)(out). In terms of biological role, NDH shuttles electrons from NAD(P)H:plastoquinone, via FMN and iron-sulfur (Fe-S) centers, to quinones in the photosynthetic chain and possibly in a chloroplast respiratory chain. The immediate electron acceptor for the enzyme in this species is believed to be plastoquinone. Couples the redox reaction to proton translocation, and thus conserves the redox energy in a proton gradient. The chain is NAD(P)H-quinone oxidoreductase subunit 2 A, chloroplastic from Solanum bulbocastanum (Wild potato).